Reading from the N-terminus, the 320-residue chain is Malate dehydrogenase (320 aa).

NAD(+) is bound by residues 10 to 15 and aspartate 34; that span reads GSGMIG. Residues arginine 83 and arginine 89 each coordinate substrate. NAD(+)-binding positions include asparagine 96 and 119–121; that span reads ITN. Asparagine 121 and arginine 152 together coordinate substrate. Histidine 176 functions as the Proton acceptor in the catalytic mechanism.

This sequence belongs to the LDH/MDH superfamily. MDH type 3 family.

The catalysed reaction is (S)-malate + NAD(+) = oxaloacetate + NADH + H(+). Functionally, catalyzes the reversible oxidation of malate to oxaloacetate. The sequence is that of Malate dehydrogenase from Bartonella quintana (strain Toulouse) (Rochalimaea quintana).